The sequence spans 115 residues: NADH-ubiquinone oxidoreductase chain 3 (115 aa).

Transmembrane regions (helical) follow at residues 4–24 (ALTLFTNTALASLLVLIAFWL), 55–75 (FFLVAITFLLFDLEIALLLPL), and 84–104 (LTTMLTMALLLISLLAASLAY).

It belongs to the complex I subunit 3 family. In terms of assembly, core subunit of respiratory chain NADH dehydrogenase (Complex I) which is composed of 45 different subunits. Interacts with TMEM186. Interacts with TMEM242.

It localises to the mitochondrion inner membrane. It catalyses the reaction a ubiquinone + NADH + 5 H(+)(in) = a ubiquinol + NAD(+) + 4 H(+)(out). Core subunit of the mitochondrial membrane respiratory chain NADH dehydrogenase (Complex I) which catalyzes electron transfer from NADH through the respiratory chain, using ubiquinone as an electron acceptor. Essential for the catalytic activity of complex I. The protein is NADH-ubiquinone oxidoreductase chain 3 of Halichoerus grypus (Gray seal).